Here is a 179-residue protein sequence, read N- to C-terminus: Large ribosomal subunit protein uL5 (179 aa).

Belongs to the universal ribosomal protein uL5 family. In terms of assembly, part of the 50S ribosomal subunit; part of the 5S rRNA/L5/L18/L25 subcomplex. Contacts the 5S rRNA and the P site tRNA. Forms a bridge to the 30S subunit in the 70S ribosome.

Its function is as follows. This is one of the proteins that bind and probably mediate the attachment of the 5S RNA into the large ribosomal subunit, where it forms part of the central protuberance. In the 70S ribosome it contacts protein S13 of the 30S subunit (bridge B1b), connecting the 2 subunits; this bridge is implicated in subunit movement. Contacts the P site tRNA; the 5S rRNA and some of its associated proteins might help stabilize positioning of ribosome-bound tRNAs. The sequence is that of Large ribosomal subunit protein uL5 from Photobacterium profundum (strain SS9).